Here is a 257-residue protein sequence, read N- to C-terminus: Gamma-secretase subunit APH-1B (257 aa).

The next 7 helical transmembrane spans lie at V5–I25, I32–V52, Y70–Y90, L115–N135, Y158–F178, W186–S206, and L213–G233.

Belongs to the APH-1 family. Probable component of the gamma-secretase complex, a complex composed of a presenilin homodimer (PSEN1 or PSEN2), nicastrin (NCSTN), APH1 (APH1A or APH1B) and PEN2. Such minimal complex is sufficient for secretase activity, although other components may exist. Interacts with PSEN1 and PSEN2.

The protein resides in the membrane. Functionally, probable subunit of the gamma-secretase complex, an endoprotease complex that catalyzes the intramembrane cleavage of integral proteins such as Notch receptors and APP (amyloid-beta precursor protein). It probably represents a stabilizing cofactor for the presenilin homodimer that promotes the formation of a stable complex. Probably present in a minority of gamma-secretase complexes compared to APH1A. The protein is Gamma-secretase subunit APH-1B (APH1B) of Pongo abelii (Sumatran orangutan).